A 362-amino-acid polypeptide reads, in one-letter code: NAD(P)H-quinone oxidoreductase subunit 1, chloroplastic (362 aa).

The next 8 membrane-spanning stretches (helical) occupy residues 29-49 (ILPI…IVWL), 103-123 (IAVI…HFVL), 128-148 (IGVF…LMAG), 164-184 (AAQS…ISLL), 202-222 (FFGW…ISSL), 247-267 (YSGI…LVSS), 303-323 (TMGI…SITI), and 335-355 (LLNL…LLTT).

It belongs to the complex I subunit 1 family. In terms of assembly, NDH is composed of at least 16 different subunits, 5 of which are encoded in the nucleus.

Its subcellular location is the plastid. The protein localises to the chloroplast thylakoid membrane. The enzyme catalyses a plastoquinone + NADH + (n+1) H(+)(in) = a plastoquinol + NAD(+) + n H(+)(out). It catalyses the reaction a plastoquinone + NADPH + (n+1) H(+)(in) = a plastoquinol + NADP(+) + n H(+)(out). In terms of biological role, NDH shuttles electrons from NAD(P)H:plastoquinone, via FMN and iron-sulfur (Fe-S) centers, to quinones in the photosynthetic chain and possibly in a chloroplast respiratory chain. The immediate electron acceptor for the enzyme in this species is believed to be plastoquinone. Couples the redox reaction to proton translocation, and thus conserves the redox energy in a proton gradient. The protein is NAD(P)H-quinone oxidoreductase subunit 1, chloroplastic of Triticum aestivum (Wheat).